The primary structure comprises 232 residues: Large ribosomal subunit protein uL1 (232 aa).

The protein belongs to the universal ribosomal protein uL1 family. In terms of assembly, part of the 50S ribosomal subunit.

In terms of biological role, binds directly to 23S rRNA. The L1 stalk is quite mobile in the ribosome, and is involved in E site tRNA release. Functionally, protein L1 is also a translational repressor protein, it controls the translation of the L11 operon by binding to its mRNA. In Burkholderia lata (strain ATCC 17760 / DSM 23089 / LMG 22485 / NCIMB 9086 / R18194 / 383), this protein is Large ribosomal subunit protein uL1.